A 151-amino-acid chain; its full sequence is MKIWVDADACPGVIKEILFRVADRAKVEVTLVANHSMRIPPSRYINMVTVPSGFDVADDEIVKRLDAGDLVITADIPLASEVIDKGGVALNPRGELYTEQNIKSILNMRDFMDTMRASGVQTGGPAAIGASEKQAFGNQLDRFVTKHHKPV.

Belongs to the UPF0178 family.

The polypeptide is UPF0178 protein Swoo_1444 (Shewanella woodyi (strain ATCC 51908 / MS32)).